The following is a 659-amino-acid chain: MAAVILESIFLKRSQQKKKTSPLNFKKRLFLLTVHKLSYYEYDFERGRRGSKKGSIDVEKITCVETVVPEKNPPPERQIPRRGEESSEMEQISIIERFPYPFQVVYDEGPLYVFSPTEELRKRWIHQLKNVIRYNSDLVQKYHPCFWIDGQYLCCSQTAKNAMGCQILENRNGSLKPGSSHRKTKKPLPPTPEEDQILKKPLPPEPAAAPVSTSELKKVVALYDYMPMNANDLQLRKGDEYFILEESNLPWWRARDKNGQEGYIPSNYVTEAEDSIEMYEWYSKHMTRSQAEQLLKQEGKEGGFIVRDSSKAGKYTVSVFAKSTGDPQGVIRHYVVCSTPQSQYYLAEKHLFSTIPELINYHQHNSAGLISRLKYPVSQQNKNAPSTAGLGYGSWEIDPKDLTFLKELGTGQFGVVKYGKWRGQYDVAIKMIKEGSMSEDEFIEEAKVMMNLSHEKLVQLYGVCTKQRPIFIITEYMANGCLLNYLREMRHRFQTQQLLEMCKDVCEAMEYLESKQFLHRDLAARNCLVNDQGVVKVSDFGLSRYVLDDEYTSSVGSKFPVRWSPPEVLMYSKFSSKSDIWAFGVLMWEIYSLGKMPYERFTNSETAEHIAQGLRLYRPHLASEKVYTIMYSCWHEKADERPTFKILLSNILDVMDEES.

N-acetylalanine is present on alanine 2. Residues 3–133 form the PH domain; it reads AVILESIFLK…WIHQLKNVIR (131 aa). The inositol-(1,3,4,5)-tetrakisphosphate 1-binding stretch occupies residues 12-24; sequence KRSQQKKKTSPLN. At serine 21 the chain carries Phosphoserine. 3 residues coordinate 1D-myo-inositol 1,3,4,5-tetrakisphosphate: lysine 26, arginine 28, and tyrosine 39. Tyrosine 40 is subject to Phosphotyrosine. Lysine 53 contributes to the 1D-myo-inositol 1,3,4,5-tetrakisphosphate binding site. Serine 55 and serine 115 each carry phosphoserine. The Btk-type zinc-finger motif lies at 135–171; sequence NSDLVQKYHPCFWIDGQYLCCSQTAKNAMGCQILENR. 4 residues coordinate Zn(2+): histidine 143, cysteine 154, cysteine 155, and cysteine 165. Positions 171–210 are disordered; the sequence is RNGSLKPGSSHRKTKKPLPPTPEEDQILKKPLPPEPAAAP. Serine 180 is subject to Phosphoserine; by PKC/PRKCB. Threonine 191 is subject to Phosphothreonine. Residues 214 to 274 enclose the SH3 domain; sequence SELKKVVALY…PSNYVTEAED (61 aa). Tyrosine 223 carries the post-translational modification Phosphotyrosine; by autocatalysis. The 97-residue stretch at 281–377 folds into the SH2 domain; sequence WYSKHMTRSQ…GLISRLKYPV (97 aa). Residues tyrosine 344 and tyrosine 361 each carry the phosphotyrosine modification. A Protein kinase domain is found at 402–655; sequence LTFLKELGTG…ILLSNILDVM (254 aa). Residues 408–416 and lysine 430 each bind ATP; that span reads LGTGQFGVV. 474-477 contributes to the clofedanol binding site; sequence TEYM. Position 474–477 (474–477) interacts with dasatinib; the sequence is TEYM. Residue aspartate 521 is the Proton acceptor of the active site. Residue leucine 542 participates in clofedanol binding. Tyrosine 551 carries the post-translational modification Phosphotyrosine; by LYN and SYK. Positions 581-588 match the CAV1-binding motif; sequence WAFGVLMW. At serine 604 the chain carries Phosphoserine. Tyrosine 617 bears the Phosphotyrosine mark. Residues serine 623 and serine 659 each carry the phosphoserine modification.

The protein belongs to the protein kinase superfamily. Tyr protein kinase family. TEC subfamily. As to quaternary structure, part of a complex composed of EEIG1, TNFRSF11A/RANK, PLCG2, GAB2, TEC and BTK; complex formation increases in the presence of TNFSF11/RANKL. Binds GTF2I through the PH domain. Interacts with SH3BP5 via the SH3 domain. Interacts with IBTK via its PH domain. Interacts with ARID3A, CAV1, FASLG, PIN1, TLR8 and TLR9. Interacts with MPL/TPOR. Zn(2+) serves as cofactor. In terms of processing, following B-cell receptor (BCR) engagement, translocates to the plasma membrane where it gets phosphorylated at Tyr-551 by LYN and SYK. Phosphorylation at Tyr-551 is followed by autophosphorylation of Tyr-223 which may create a docking site for a SH2 containing protein. Phosphorylation at Ser-180 by PRKCB, leads in translocation of BTK back to the cytoplasmic fraction. Phosphorylation at Ser-21 and Ser-115 creates a binding site for PIN1 at these Ser-Pro motifs, and promotes it's recruitment. Predominantly expressed in B-lymphocytes.

The protein resides in the cytoplasm. It is found in the cell membrane. It localises to the nucleus. The protein localises to the membrane raft. The enzyme catalyses L-tyrosyl-[protein] + ATP = O-phospho-L-tyrosyl-[protein] + ADP + H(+). With respect to regulation, activated by phosphorylation. In primary B lymphocytes, is almost always non-phosphorylated and is thus catalytically inactive. Stimulation of TLR8 and TLR9 causes BTK activation. As a negative feedback mechanism to fine-tune BCR signaling, activated PRKCB down-modulates BTK function via direct phosphorylation of BTK at Ser-180, resulting in translocation of BTK back to the cytoplasmic fraction. PIN1, SH3BP5, and IBTK were also identified as BTK activity inhibitors. Interaction with CAV1 leads to dramatic down-regulation of the kinase activity of BTK. LFM-13A is a specific inhibitor of BTK. Dasatinib, a cancer drug acting as a tyrosine kinase inhibitor, also blocks BTK activity. Its function is as follows. Non-receptor tyrosine kinase indispensable for B lymphocyte development, differentiation and signaling. Binding of antigen to the B-cell antigen receptor (BCR) triggers signaling that ultimately leads to B-cell activation. After BCR engagement and activation at the plasma membrane, phosphorylates PLCG2 at several sites, igniting the downstream signaling pathway through calcium mobilization, followed by activation of the protein kinase C (PKC) family members. PLCG2 phosphorylation is performed in close cooperation with the adapter protein B-cell linker protein BLNK. BTK acts as a platform to bring together a diverse array of signaling proteins and is implicated in cytokine receptor signaling pathways. Plays an important role in the function of immune cells of innate as well as adaptive immunity, as a component of the Toll-like receptors (TLR) pathway. The TLR pathway acts as a primary surveillance system for the detection of pathogens and are crucial to the activation of host defense. Especially, is a critical molecule in regulating TLR9 activation in splenic B-cells. Within the TLR pathway, induces tyrosine phosphorylation of TIRAP which leads to TIRAP degradation. BTK also plays a critical role in transcription regulation. Induces the activity of NF-kappa-B, which is involved in regulating the expression of hundreds of genes. BTK is involved on the signaling pathway linking TLR8 and TLR9 to NF-kappa-B. Acts as an activator of NLRP3 inflammasome assembly by mediating phosphorylation of NLRP3. Transiently phosphorylates transcription factor GTF2I on tyrosine residues in response to BCR. GTF2I then translocates to the nucleus to bind regulatory enhancer elements to modulate gene expression. ARID3A and NFAT are other transcriptional target of BTK. BTK is required for the formation of functional ARID3A DNA-binding complexes. There is however no evidence that BTK itself binds directly to DNA. BTK has a dual role in the regulation of apoptosis. Plays a role in STING1-mediated induction of type I interferon (IFN) response by phosphorylating DDX41. The chain is Tyrosine-protein kinase BTK (BTK) from Homo sapiens (Human).